The following is a 141-amino-acid chain: Nucleoside diphosphate kinase (141 aa).

6 residues coordinate ATP: K9, F57, R85, T91, R102, and N112. H115 (pros-phosphohistidine intermediate) is an active-site residue.

Belongs to the NDK family. As to quaternary structure, homotetramer. Mg(2+) is required as a cofactor.

Its subcellular location is the cytoplasm. The catalysed reaction is a 2'-deoxyribonucleoside 5'-diphosphate + ATP = a 2'-deoxyribonucleoside 5'-triphosphate + ADP. The enzyme catalyses a ribonucleoside 5'-diphosphate + ATP = a ribonucleoside 5'-triphosphate + ADP. Its function is as follows. Major role in the synthesis of nucleoside triphosphates other than ATP. The ATP gamma phosphate is transferred to the NDP beta phosphate via a ping-pong mechanism, using a phosphorylated active-site intermediate. The protein is Nucleoside diphosphate kinase of Chlamydia trachomatis serovar D (strain ATCC VR-885 / DSM 19411 / UW-3/Cx).